The chain runs to 360 residues: MIIYATAVQTINSFVKLESLKEVYGLIWIFVPIFSLVLGIITGVLVIVWLEREISAGIQQRIGPEYAGPLGILQALADGTKLLFKENLRPSRGNTPLFSIGPSIAVISILLSYSVIPFSNHLVLADLNIGIFLWIAISSIAPIGLLMSGYGSNNKYSFLGGLRAAAQSISYEIPLTLCVLSISLLSNSLSTVDIVEAQSKYGFWGWNLWRQPIGFIIFLISSLAECERLPFDLPEAEEELIAGYQTEYSGIKFGLFYVASYLNLLISSLFVTVLYLGGWNISIPYISILELFQRDQIFGTTIGIFITLAKTYLFLFVSIATRWTLPRLRMDQLLNLGWKFLLPISLGNLLLTTSFQLFSL.

The next 8 helical transmembrane spans lie at 27–47, 98–118, 129–149, 165–185, 203–223, 253–273, 297–317, and 340–360; these read IWIF…VLVI, FSIG…VIPF, IGIF…LMSG, AAQS…ISLL, FWGW…ISSL, FGLF…FVTV, IFGT…FLFV, and FLLP…LFSL.

The protein belongs to the complex I subunit 1 family. In terms of assembly, NDH is composed of at least 16 different subunits, 5 of which are encoded in the nucleus.

It localises to the plastid. The protein resides in the chloroplast thylakoid membrane. It carries out the reaction a plastoquinone + NADH + (n+1) H(+)(in) = a plastoquinol + NAD(+) + n H(+)(out). The enzyme catalyses a plastoquinone + NADPH + (n+1) H(+)(in) = a plastoquinol + NADP(+) + n H(+)(out). Its function is as follows. NDH shuttles electrons from NAD(P)H:plastoquinone, via FMN and iron-sulfur (Fe-S) centers, to quinones in the photosynthetic chain and possibly in a chloroplast respiratory chain. The immediate electron acceptor for the enzyme in this species is believed to be plastoquinone. Couples the redox reaction to proton translocation, and thus conserves the redox energy in a proton gradient. The polypeptide is NAD(P)H-quinone oxidoreductase subunit 1, chloroplastic (Arabidopsis thaliana (Mouse-ear cress)).